The primary structure comprises 462 residues: Argininosuccinate lyase 2 (462 aa).

This sequence belongs to the lyase 1 family. Argininosuccinate lyase subfamily.

The protein localises to the cytoplasm. The catalysed reaction is 2-(N(omega)-L-arginino)succinate = fumarate + L-arginine. The protein operates within amino-acid biosynthesis; L-arginine biosynthesis; L-arginine from L-ornithine and carbamoyl phosphate: step 3/3. This Shouchella clausii (strain KSM-K16) (Alkalihalobacillus clausii) protein is Argininosuccinate lyase 2.